The primary structure comprises 326 residues: Light-induced protein, chloroplastic (326 aa).

Residues 1–63 constitute a chloroplast transit peptide; that stretch reads MASISSLNQI…TNPKPKFTAQ (63 aa).

This sequence belongs to the LIPC family. In terms of assembly, associates with the major light-harvesting antenna complex polypeptides of the PSII oxygen-evolving complex. In terms of tissue distribution, expressed in leaves.

It is found in the plastid. The protein localises to the chloroplast thylakoid membrane. In terms of biological role, required for normal plant growth. May be both photoprotective and play an ancillary role in photosynthesis. May structurally stabilize thylakoids during osmotic and oxidative stress. This is Light-induced protein, chloroplastic from Solanum tuberosum (Potato).